We begin with the raw amino-acid sequence, 412 residues long: CinA-like protein (412 aa).

It belongs to the CinA family.

The sequence is that of CinA-like protein from Salinibacter ruber (strain DSM 13855 / M31).